Reading from the N-terminus, the 81-residue chain is Photosystem I iron-sulfur center (81 aa).

4Fe-4S ferredoxin-type domains are found at residues 2 to 31 (SHSV…MIPW) and 39 to 68 (IASA…VRVY). Positions 11, 14, 17, 21, 48, 51, 54, and 58 each coordinate [4Fe-4S] cluster.

As to quaternary structure, the eukaryotic PSI reaction center is composed of at least 11 subunits. It depends on [4Fe-4S] cluster as a cofactor.

It is found in the plastid thylakoid membrane. The catalysed reaction is reduced [plastocyanin] + hnu + oxidized [2Fe-2S]-[ferredoxin] = oxidized [plastocyanin] + reduced [2Fe-2S]-[ferredoxin]. Functionally, apoprotein for the two 4Fe-4S centers FA and FB of photosystem I (PSI); essential for photochemical activity. FB is the terminal electron acceptor of PSI, donating electrons to ferredoxin. The C-terminus interacts with PsaA/B/D and helps assemble the protein into the PSI complex. Required for binding of PsaD and PsaE to PSI. PSI is a plastocyanin-ferredoxin oxidoreductase, converting photonic excitation into a charge separation, which transfers an electron from the donor P700 chlorophyll pair to the spectroscopically characterized acceptors A0, A1, FX, FA and FB in turn. The polypeptide is Photosystem I iron-sulfur center (Cuscuta gronovii (Common dodder)).